Reading from the N-terminus, the 409-residue chain is Autophagy-related protein 21 (409 aa).

WD repeat units lie at residues 1–35 (MKVL…KCFE), 221–261 (VHKG…TLQS), 273–312 (TRPC…QQNK), and 361–402 (KVDD…GECI). Residues 269-273 (FRRGT) carry the L/FRRG motif motif.

Belongs to the WD repeat PROPPIN family.

Its subcellular location is the cytoplasm. The protein resides in the membrane. It localises to the vacuole membrane. Required for cytoplasm to vacuole transport (Cvt) vesicles formation and mitophagy. Involved in binding of phosphatidylethanolamine to ATG8 and in recruitment of ATG8 and ATG5 to the pre-autophagosomal structure. Protects ATG8 from ARG4-mediated cleavage. The polypeptide is Autophagy-related protein 21 (ATG21) (Eremothecium gossypii (strain ATCC 10895 / CBS 109.51 / FGSC 9923 / NRRL Y-1056) (Yeast)).